The following is a 260-amino-acid chain: Flavin-dependent thymidylate synthase (260 aa).

The region spanning 1 to 202 is the ThyX domain; that stretch reads MKIKLVSYSK…PRLFKYAGPN (202 aa). FAD is bound by residues S55, 79–81, and Q87; that span reads RHR. DUMP is bound by residues 76–79, 87–91, and R141; these read QLVR and QMSHR. A ThyX motif motif is present at residues 79-89; sequence RHRIASYTQMS. FAD contacts are provided by residues 157–159 and N163; that span reads NAR. Residue R168 coordinates dUMP. R168 functions as the Involved in ionization of N3 of dUMP, leading to its activation in the catalytic mechanism.

It belongs to the thymidylate synthase ThyX family. Homotetramer. FAD serves as cofactor.

It catalyses the reaction dUMP + (6R)-5,10-methylene-5,6,7,8-tetrahydrofolate + NADPH + H(+) = dTMP + (6S)-5,6,7,8-tetrahydrofolate + NADP(+). Its pathway is pyrimidine metabolism; dTTP biosynthesis. In terms of biological role, catalyzes the reductive methylation of 2'-deoxyuridine-5'-monophosphate (dUMP) to 2'-deoxythymidine-5'-monophosphate (dTMP) while utilizing 5,10-methylenetetrahydrofolate (mTHF) as the methyl donor, and NADPH and FADH(2) as the reductant. The protein is Flavin-dependent thymidylate synthase of Sulfolobus acidocaldarius (strain ATCC 33909 / DSM 639 / JCM 8929 / NBRC 15157 / NCIMB 11770).